A 535-amino-acid polypeptide reads, in one-letter code: Dual specificity calcium/calmodulin-dependent 3',5'-cyclic nucleotide phosphodiesterase 1B (535 aa).

The segment at 1-21 (MELSPRSPPEMLESDCPSPLE) is disordered. Residues Ser7 and Ser14 each carry the phosphoserine modification. Calmodulin-binding stretches follow at residues 27–47 (SKKM…QLEN) and 117–140 (EKPK…MFRR). In terms of domain architecture, PDEase spans 145-502 (VGPTYSTAVH…QKWKERAASG (358 aa)). His222 functions as the Proton donor in the catalytic mechanism. His226, His262, Asp263, and Asp369 together coordinate Zn(2+). A Mg(2+)-binding site is contributed by Asp263. Disordered regions lie at residues 445 to 474 (PLTD…GDPN) and 495 to 535 (WKER…GNLD). Residues 454 to 463 (KSQPSFQWRQ) show a composition bias toward polar residues. Phosphoserine occurs at positions 465 and 513.

The protein belongs to the cyclic nucleotide phosphodiesterase family. PDE1 subfamily. Homodimer. It depends on Zn(2+) as a cofactor. The cofactor is Mg(2+). Expressed in brain.

It localises to the cytoplasm. Its subcellular location is the cytosol. The catalysed reaction is a nucleoside 3',5'-cyclic phosphate + H2O = a nucleoside 5'-phosphate + H(+). The enzyme catalyses 3',5'-cyclic GMP + H2O = GMP + H(+). It carries out the reaction 3',5'-cyclic AMP + H2O = AMP + H(+). Its activity is regulated as follows. Type I PDE are activated by the binding of calmodulin in the presence of Ca(2+). Functionally, cyclic nucleotide phosphodiesterase with a dual specificity for the second messengers cAMP and cGMP, which are key regulators of many important physiological processes. Has a preference for cGMP as a substrate. The polypeptide is Dual specificity calcium/calmodulin-dependent 3',5'-cyclic nucleotide phosphodiesterase 1B (Rattus norvegicus (Rat)).